Reading from the N-terminus, the 562-residue chain is MLKNQSNSVHVDGSHNNSSNYNDEVSSIAKSIRNADESVNFITFNQDASCIALGLKNGYKIFNCKPNFGKCYQFKKNESIGKIEMLYCTSLIAIVGLGEEVGSSPRKLKIINTRRQSTICELIFPSTILQVKLSKSRMIILLEEQIYIYDVTTMKLLHTIETSPNGNGLCTLSADNCDGKNNSYLAYPSPPKTITHDSLLVNGINTNGGMNSIQNNIQSVSNSPNRIGDVIIFNTTTLQPLSVIEAHKSALAAITLSTDGTLLATASDKGTIVRVFSVATGLKLYQFRRGTYPTKIFTLSFSFDNKYVLATSSSGTVHIFRLGEEESLENKHKRKRNSKKLKLNPEYETITEENENEIQKDDAEDDDIIQDDGDDSDADDDDDESLEVIPSKHRKLSQDSNNSFTSFNSAFSNDDNKDNKSEPLIDQTRLSVARLIRRSSQTLGRKAAQKMGDFLPTRFSSILEPTRNFASLKINSVSKDIKSIAIINNEVQEDLVPQAYLNAKENNPSPPKDISVNTAKDLLPLNLLHINVVTSEGYFYTYGLDPDRGGDCILLHQYFLLD.

The disordered stretch occupies residues 1 to 22 (MLKNQSNSVHVDGSHNNSSNYN). WD repeat units follow at residues 246 to 286 (AHKS…KLYQ) and 291 to 330 (TYPT…SLEN). The short motif at 287 to 291 (FRRGT) is the L/FRRG motif element. Residues 327–425 (SLENKHKRKR…NKDNKSEPLI (99 aa)) are disordered. Over residues 331-342 (KHKRKRNSKKLK) the composition is skewed to basic residues. Residues 349–386 (TITEENENEIQKDDAEDDDIIQDDGDDSDADDDDDESL) are compositionally biased toward acidic residues. Residues 399 to 413 (DSNNSFTSFNSAFSN) are compositionally biased toward low complexity. The span at 414 to 423 (DDNKDNKSEP) shows a compositional bias: basic and acidic residues.

This sequence belongs to the WD repeat PROPPIN family. As to quaternary structure, component of the PI(3,5)P2 regulatory complex.

It is found in the preautophagosomal structure membrane. The protein resides in the vacuole membrane. It localises to the endosome membrane. In terms of biological role, the PI(3,5)P2 regulatory complex regulates both the synthesis and turnover of phosphatidylinositol 3,5-bisphosphate (PtdIns(3,5)P2). Necessary for proper vacuole morphology. Plays an important role in osmotically-induced vacuole fragmentation. Required for cytoplasm to vacuole transport (Cvt) vesicle formation, pexophagy and starvation-induced autophagy. Involved in correct ATG9 trafficking to the pre-autophagosomal structure. Might also be involved in premeiotic DNA replication. In Debaryomyces hansenii (strain ATCC 36239 / CBS 767 / BCRC 21394 / JCM 1990 / NBRC 0083 / IGC 2968) (Yeast), this protein is Autophagy-related protein 18 (ATG18).